Here is a 273-residue protein sequence, read N- to C-terminus: Ribosomal RNA small subunit methyltransferase A (273 aa).

Positions 18, 20, 45, 66, 91, and 113 each coordinate S-adenosyl-L-methionine.

The protein belongs to the class I-like SAM-binding methyltransferase superfamily. rRNA adenine N(6)-methyltransferase family. RsmA subfamily.

The protein localises to the cytoplasm. It catalyses the reaction adenosine(1518)/adenosine(1519) in 16S rRNA + 4 S-adenosyl-L-methionine = N(6)-dimethyladenosine(1518)/N(6)-dimethyladenosine(1519) in 16S rRNA + 4 S-adenosyl-L-homocysteine + 4 H(+). Its function is as follows. Specifically dimethylates two adjacent adenosines (A1518 and A1519) in the loop of a conserved hairpin near the 3'-end of 16S rRNA in the 30S particle. May play a critical role in biogenesis of 30S subunits. The polypeptide is Ribosomal RNA small subunit methyltransferase A (Cronobacter sakazakii (strain ATCC BAA-894) (Enterobacter sakazakii)).